Consider the following 1070-residue polypeptide: Carbamoyl phosphate synthase large chain (1070 aa).

Positions 1–401 (MPKRDDIKTI…ALLKAVRSLE (401 aa)) are carboxyphosphate synthetic domain. ATP-binding residues include Arg-129, Arg-169, Gly-175, Gly-176, Lys-208, Ile-210, Glu-215, Gly-241, Ile-242, His-243, Gln-284, and Glu-298. In terms of domain architecture, ATP-grasp 1 spans 133 to 327 (RDLMNELGEP…IAKLAAKIAV (195 aa)). Mg(2+) is bound by residues Gln-284, Glu-298, and Asn-300. Mn(2+) contacts are provided by Gln-284, Glu-298, and Asn-300. An oligomerization domain region spans residues 402–546 (VGADHLLLEE…YSTYEEENES (145 aa)). The carbamoyl phosphate synthetic domain stretch occupies residues 547–929 (TRSAKESVIV…ALYKGFVASG (383 aa)). The ATP-grasp 2 domain occupies 671–861 (EKALEILQIP…MANVATRVIL (191 aa)). ATP contacts are provided by Arg-707, Arg-746, Val-748, Glu-752, Gly-777, Val-778, His-779, Ser-780, Gln-820, and Glu-832. Mg(2+) contacts are provided by Gln-820, Glu-832, and Asn-834. The Mn(2+) site is built by Gln-820, Glu-832, and Asn-834. Positions 930-1070 (TTMHDYGTVL…SEVKQPKVRV (141 aa)) constitute an MGS-like domain. An allosteric domain region spans residues 930–1070 (TTMHDYGTVL…SEVKQPKVRV (141 aa)).

Belongs to the CarB family. Composed of two chains; the small (or glutamine) chain promotes the hydrolysis of glutamine to ammonia, which is used by the large (or ammonia) chain to synthesize carbamoyl phosphate. Tetramer of heterodimers (alpha,beta)4. The cofactor is Mg(2+). Requires Mn(2+) as cofactor.

The catalysed reaction is hydrogencarbonate + L-glutamine + 2 ATP + H2O = carbamoyl phosphate + L-glutamate + 2 ADP + phosphate + 2 H(+). It carries out the reaction hydrogencarbonate + NH4(+) + 2 ATP = carbamoyl phosphate + 2 ADP + phosphate + 2 H(+). The protein operates within amino-acid biosynthesis; L-arginine biosynthesis; carbamoyl phosphate from bicarbonate: step 1/1. It functions in the pathway pyrimidine metabolism; UMP biosynthesis via de novo pathway; (S)-dihydroorotate from bicarbonate: step 1/3. In terms of biological role, large subunit of the glutamine-dependent carbamoyl phosphate synthetase (CPSase). CPSase catalyzes the formation of carbamoyl phosphate from the ammonia moiety of glutamine, carbonate, and phosphate donated by ATP, constituting the first step of 2 biosynthetic pathways, one leading to arginine and/or urea and the other to pyrimidine nucleotides. The large subunit (synthetase) binds the substrates ammonia (free or transferred from glutamine from the small subunit), hydrogencarbonate and ATP and carries out an ATP-coupled ligase reaction, activating hydrogencarbonate by forming carboxy phosphate which reacts with ammonia to form carbamoyl phosphate. The sequence is that of Carbamoyl phosphate synthase large chain from Listeria welshimeri serovar 6b (strain ATCC 35897 / DSM 20650 / CCUG 15529 / CIP 8149 / NCTC 11857 / SLCC 5334 / V8).